Consider the following 239-residue polypeptide: MNTTPDTPTPRALRELTPLEARILGVLVEKQHTVPDTYPLSLNALTAGCNQKTARAPVMNVSEDEVTTALDELKRLSLVMEGSSSRVPRFEHNMNRVLGIPSQAIALLTILLLRGPQTAAELRLNSARLHGFADISSVEAFLDELAARAAARRPAAACAGCAREPLDAPDVRRREHGRLRERGCRRRRGFGAAFRIRGAKGRTEAPRGRSGATQCAGSTDGERTRHRRRRTGRRVLIAS.

Positions 196–239 (IRGAKGRTEAPRGRSGATQCAGSTDGERTRHRRRRTGRRVLIAS) are disordered. Over residues 224-233 (TRHRRRRTGR) the composition is skewed to basic residues.

It belongs to the UPF0502 family.

This Burkholderia orbicola (strain AU 1054) protein is UPF0502 protein Bcen_5249.